Reading from the N-terminus, the 532-residue chain is Apolipoprotein N-acyltransferase (532 aa).

6 consecutive transmembrane segments (helical) span residues 37 to 57 (IFVAGFVSFPVLVWLIDGAIA), 75 to 95 (WWFGFGYFVSGLWWIGTALLV), 106 to 126 (LAVLGLPAFLALFYAFAAMIA), 128 to 148 (LLWSDGLGRILAFAFGFALAE), 179 to 199 (VIGLVGMSALAVFVFAAPALL), and 207 to 227 (TGIGLAIFLALAHVGFGAWTL). Residues 245–494 (VQPSIAQAMK…VGVVDSYLPS (250 aa)) form the CN hydrolase domain. The active-site Proton acceptor is the Glu289. Lys353 is an active-site residue. The Nucleophile role is filled by Cys406. Residues 505–525 (GWIQTVLILLTLLAASVGLIL) traverse the membrane as a helical segment.

It belongs to the CN hydrolase family. Apolipoprotein N-acyltransferase subfamily.

It is found in the cell inner membrane. The enzyme catalyses N-terminal S-1,2-diacyl-sn-glyceryl-L-cysteinyl-[lipoprotein] + a glycerophospholipid = N-acyl-S-1,2-diacyl-sn-glyceryl-L-cysteinyl-[lipoprotein] + a 2-acyl-sn-glycero-3-phospholipid + H(+). It participates in protein modification; lipoprotein biosynthesis (N-acyl transfer). Catalyzes the phospholipid dependent N-acylation of the N-terminal cysteine of apolipoprotein, the last step in lipoprotein maturation. The protein is Apolipoprotein N-acyltransferase of Brucella melitensis biotype 1 (strain ATCC 23456 / CCUG 17765 / NCTC 10094 / 16M).